A 134-amino-acid polypeptide reads, in one-letter code: MVKIRLKRAGRKKMPFYQIVAADGRAPRDGKFLEVLGHYNPTAKPHTVTIEKDRVAYWLNVGAQPTDTVHSLIRGTGLLHEMNLKRRGLSESDIAAQMEAWRQKEAERRQKRLNAKLRRRQAKKAAEAAGSAEG.

The interval 115 to 134 is disordered; it reads AKLRRRQAKKAAEAAGSAEG.

Belongs to the bacterial ribosomal protein bS16 family.

This is Small ribosomal subunit protein bS16 from Chlorobaculum tepidum (strain ATCC 49652 / DSM 12025 / NBRC 103806 / TLS) (Chlorobium tepidum).